The primary structure comprises 636 residues: Chaperone protein DnaK (636 aa).

Threonine 203 bears the Phosphothreonine; by autocatalysis mark. Positions 602 to 636 (VYGKQQEGAPAQEEPSAEGKKADDEGTVEGEFREV) are disordered. Basic and acidic residues predominate over residues 618-636 (AEGKKADDEGTVEGEFREV).

Belongs to the heat shock protein 70 family.

Acts as a chaperone. This chain is Chaperone protein DnaK, found in Dehalococcoides mccartyi (strain CBDB1).